A 339-amino-acid chain; its full sequence is STEAP1 protein (339 aa).

A run of 2 helical transmembrane segments spans residues 71-91 (WHLP…YTLL) and 119-139 (PMVS…AAIV). In terms of domain architecture, Ferric oxidoreductase spans 118 to 265 (LPMVSITLLA…KLGIVSLLLG (148 aa)). FAD-binding residues include Gln-140 and Arg-161. A run of 2 helical transmembrane segments spans residues 164–184 (FGLL…SYPM) and 218–238 (IYVS…VTSI). Heme b is bound at residue His-175. Ser-237 and Gln-254 together coordinate FAD. 2 helical membrane passes run 258–278 (GIVS…NKWI) and 291–311 (FMIA…LFLP). Heme b is bound at residue His-268.

This sequence belongs to the STEAP family. As to quaternary structure, homotrimer. FAD serves as cofactor. Heme b is required as a cofactor. Ubiquitously expressed. Highly expressed in prostate tumors.

The protein localises to the endosome membrane. It is found in the cell membrane. Does not function as a metalloreductase due to the absence of binding sites for the electron-donating substrate NADPH. Promotes Fe(3+) reduction when fused to the NADPH-binding domain of STEAP4. This is STEAP1 protein (STEAP1) from Homo sapiens (Human).